The primary structure comprises 653 residues: Probable potassium transport system protein Kup (653 aa).

Transmembrane regions (helical) follow at residues 37–57 (ALLALGALGIVYGDIGTSPLY), 79–99 (VLSLIFWSLIIVVSVKYLLLV), 134–154 (ITLGIFGAALLYGDGIITPAI), 168–188 (AVFDPYVIPIALVILVALFLV), 196–216 (IGAVFGPVMCIWFLTLAGLGV), 243–263 (LHGFLVLGGVFLVVTGCEALY), 278–298 (WFSMVLPALMLNYLGQGALLL), 320–340 (LVALATVAGVIASQALIAGVF), 368–388 (IYLPGLNWALLVGVVALVLGF), 397–417 (AYGIAVSTAMVITTLMAYVVA), 426–446 (WVAIPVVGLFLSVELAFFGAN), and 450–470 (VADGGWFPLLMAVVVFTLMTT).

This sequence belongs to the HAK/KUP transporter (TC 2.A.72) family.

Its subcellular location is the cell inner membrane. It catalyses the reaction K(+)(in) + H(+)(in) = K(+)(out) + H(+)(out). Transport of potassium into the cell. Likely operates as a K(+):H(+) symporter. This is Probable potassium transport system protein Kup from Myxococcus xanthus (strain DK1622).